The following is an 859-amino-acid chain: Leucine--tRNA ligase (859 aa).

Residues 42–52 carry the 'HIGH' region motif; that stretch reads PYPSGKLHVGH. Positions 611–615 match the 'KMSKS' region motif; it reads KMSKS. Position 614 (Lys614) interacts with ATP.

It belongs to the class-I aminoacyl-tRNA synthetase family.

It is found in the cytoplasm. The enzyme catalyses tRNA(Leu) + L-leucine + ATP = L-leucyl-tRNA(Leu) + AMP + diphosphate. This Fusobacterium nucleatum subsp. nucleatum (strain ATCC 25586 / DSM 15643 / BCRC 10681 / CIP 101130 / JCM 8532 / KCTC 2640 / LMG 13131 / VPI 4355) protein is Leucine--tRNA ligase.